Here is a 649-residue protein sequence, read N- to C-terminus: Vitamin K-dependent protein S (649 aa).

Residues 1-14 constitute a propeptide that is removed on maturation; that stretch reads SKQQASQVLVRKRR. The Gla domain occupies 15–60; the sequence is ANSMLEETKQGNLERECIEELCNKEEAREVFENDPETDYFYPKYLV. 4-carboxyglutamate is present on residues Glu-20, Glu-21, Glu-28, Glu-30, Glu-33, Glu-34, Glu-39, Glu-40, Glu-43, Glu-46, and Glu-50. A disulfide bridge connects residues Cys-31 and Cys-36. The thrombin-sensitive stretch occupies residues 61 to 89; that stretch reads CLRSFQSGLFTAARQSTDAYPDLRSCVNA. Residues 90–128 enclose the EGF-like 1 domain; that stretch reads IPDQCSPLPCNEDGYMSCKDGKASFTCTCKPGWQGERCE. Cystine bridges form between Cys-94–Cys-107, Cys-99–Cys-116, Cys-118–Cys-127, Cys-134–Cys-148, Cys-144–Cys-157, Cys-159–Cys-172, Cys-178–Cys-190, Cys-185–Cys-199, Cys-201–Cys-214, Cys-220–Cys-229, Cys-225–Cys-238, Cys-240–Cys-255, and Cys-422–Cys-448. At Asp-109 the chain carries (3R)-3-hydroxyaspartate. Residues 130–173 enclose the EGF-like 2; calcium-binding domain; it reads DINECKDPSNINGGCSQICDNTPGSYHCSCKSGFVMLSNKKDCK. An EGF-like 3; calcium-binding domain is found at 174–215; it reads DVDECSLKPNMCGTAVCKNIPGDFECECPEGYRYNLKSKSCE. An EGF-like 4; calcium-binding domain is found at 216 to 256; sequence DVDECSENMCAQLCVNYPGGYTCYCDGKKGFKLAQDQKSCE. 2 consecutive Laminin G-like domains span residues 272 to 448 and 457 to 639; these read LLYL…NKHC and YYPG…AHSC. N-linked (GlcNAc...) asparagine glycosylation is found at Asn-472, Asn-482, and Asn-503. Cys-612 and Cys-639 are oxidised to a cystine.

In terms of processing, the iron and 2-oxoglutarate dependent 3-hydroxylation of aspartate and asparagine is (R) stereospecific within EGF domains. In terms of tissue distribution, plasma.

It is found in the secreted. Functionally, anticoagulant plasma protein; it is a cofactor to activated protein C in the degradation of coagulation factors Va and VIIIa. It helps to prevent coagulation and stimulating fibrinolysis. The protein is Vitamin K-dependent protein S (PROS1) of Macaca mulatta (Rhesus macaque).